The sequence spans 307 residues: tRNA dimethylallyltransferase (307 aa).

9–16 (GPTAVGKT) contacts ATP. 11–16 (TAVGKT) is a binding site for substrate. Positions 34–37 (DSMQ) are interaction with substrate tRNA.

Belongs to the IPP transferase family. In terms of assembly, monomer. Requires Mg(2+) as cofactor.

It carries out the reaction adenosine(37) in tRNA + dimethylallyl diphosphate = N(6)-dimethylallyladenosine(37) in tRNA + diphosphate. Functionally, catalyzes the transfer of a dimethylallyl group onto the adenine at position 37 in tRNAs that read codons beginning with uridine, leading to the formation of N6-(dimethylallyl)adenosine (i(6)A). This chain is tRNA dimethylallyltransferase, found in Limosilactobacillus reuteri (strain DSM 20016) (Lactobacillus reuteri).